The primary structure comprises 547 residues: Chaperonin GroEL (547 aa).

Residues 30-33 (TLGP), K51, 87-91 (DGTTT), G415, 479-481 (NAA), and D495 contribute to the ATP site.

Belongs to the chaperonin (HSP60) family. As to quaternary structure, forms a cylinder of 14 subunits composed of two heptameric rings stacked back-to-back. Interacts with the co-chaperonin GroES.

It localises to the cytoplasm. It catalyses the reaction ATP + H2O + a folded polypeptide = ADP + phosphate + an unfolded polypeptide.. In terms of biological role, together with its co-chaperonin GroES, plays an essential role in assisting protein folding. The GroEL-GroES system forms a nano-cage that allows encapsulation of the non-native substrate proteins and provides a physical environment optimized to promote and accelerate protein folding. The sequence is that of Chaperonin GroEL from Pseudomonas syringae pv. syringae (strain B728a).